Here is a 122-residue protein sequence, read N- to C-terminus: UPF0102 protein CTC_01256 (122 aa).

It belongs to the UPF0102 family.

The sequence is that of UPF0102 protein CTC_01256 from Clostridium tetani (strain Massachusetts / E88).